The sequence spans 602 residues: RNA-binding NOB1-like protein (602 aa).

A disordered region spans residues 1–25 (MDPKPTSMWSSIVKKDPPSKPPVND). The 87-residue stretch at 48–134 (VVDANAIIEG…LKLIALSYTL (87 aa)) folds into the PINc domain. 2 disordered regions span residues 258–278 (SQGQ…VSRS) and 301–331 (IQKD…GEDI). The span at 301-329 (IQKDQEADKARHTKEANETHAKDSGKNGE) shows a compositional bias: basic and acidic residues. The stretch at 331–365 (ISSILKDMRLEEESLRALQEETEETNAEATLINGE) forms a coiled coil. Residues 452-522 (IRQLHRWILK…QYSIPMPKGG (71 aa)) form an NOB1 zinc finger. Zn(2+) contacts are provided by Cys462, Cys465, Cys477, and Cys480.

It belongs to the NOB1 family. As to quaternary structure, component of the small ribosomal subunit, ribosomal RNA processing complex (SSU RRP complex). Highly expressed in flowers and siliques and at lower levels in roots, hypocotyls, stems, leaves and seeds.

Its subcellular location is the nucleus. The protein localises to the nucleoplasm. The protein resides in the cytoplasm. In terms of biological role, essential protein required during embryogenesis and pollen development. Endonuclease cleaving pre-rRNA at the 3' end of the mature 18S rRNA (D-site); cleaves 20S pre-rRNA in the cytoplasm. Required for processing of 20S pre-rRNA precursor and biogenesis of 40S ribosomal subunits. This is RNA-binding NOB1-like protein from Arabidopsis thaliana (Mouse-ear cress).